We begin with the raw amino-acid sequence, 150 residues long: Nucleoside diphosphate kinase (150 aa).

ATP contacts are provided by lysine 10, phenylalanine 58, arginine 86, threonine 92, arginine 103, and asparagine 113. Catalysis depends on histidine 116, which acts as the Pros-phosphohistidine intermediate.

The protein belongs to the NDK family. The cofactor is Mg(2+).

The protein resides in the cytoplasm. It catalyses the reaction a 2'-deoxyribonucleoside 5'-diphosphate + ATP = a 2'-deoxyribonucleoside 5'-triphosphate + ADP. The enzyme catalyses a ribonucleoside 5'-diphosphate + ATP = a ribonucleoside 5'-triphosphate + ADP. In terms of biological role, major role in the synthesis of nucleoside triphosphates other than ATP. The ATP gamma phosphate is transferred to the NDP beta phosphate via a ping-pong mechanism, using a phosphorylated active-site intermediate. The chain is Nucleoside diphosphate kinase from Methanobrevibacter smithii (strain ATCC 35061 / DSM 861 / OCM 144 / PS).